A 121-amino-acid chain; its full sequence is Small ribosomal subunit protein uS13 (121 aa).

The disordered stretch occupies residues 94 to 121 (GLPLRGQRTRTNARTRKGPRRAAQSLKK).

The protein belongs to the universal ribosomal protein uS13 family. As to quaternary structure, part of the 30S ribosomal subunit. Forms a loose heterodimer with protein S19. Forms two bridges to the 50S subunit in the 70S ribosome.

In terms of biological role, located at the top of the head of the 30S subunit, it contacts several helices of the 16S rRNA. In the 70S ribosome it contacts the 23S rRNA (bridge B1a) and protein L5 of the 50S subunit (bridge B1b), connecting the 2 subunits; these bridges are implicated in subunit movement. Contacts the tRNAs in the A and P-sites. In Paraburkholderia phytofirmans (strain DSM 17436 / LMG 22146 / PsJN) (Burkholderia phytofirmans), this protein is Small ribosomal subunit protein uS13.